Here is a 512-residue protein sequence, read N- to C-terminus: SWI/SNF complex subunit SWI3A (512 aa).

In terms of domain architecture, SWIRM spans 13-110; sequence YTIPAQSSWF…FSSSLKKNDH (98 aa). Positions 223–274 constitute an SANT domain; that stretch reads SAAAVWTEEEILLLLESVLKHGDDWELISQSVSTKSRLDCISKLIELPFGEF. The tract at residues 291–325 is disordered; sequence DENTEQVQTDGQEHEETETREEKEDRVNEDEPPAK. Residues 424–488 are a coiled coil; the sequence is ALGAAAAQAK…IEGVKETIIQ (65 aa).

In terms of assembly, homodimers and heterodimers. Interacts with SWI3B, SWI3C, BSH, and the C-terminus of FCA, but not with BRM or SWI3D. In terms of tissue distribution, expressed in roots, stems, leaves and flowers, but not in siliques.

The protein localises to the nucleus. Component of a multiprotein complex equivalent of the SWI/SNF complex, an ATP-dependent chromatin-remodeling complex, which is required for the positive and negative regulation of gene expression of a large number of genes. It changes chromatin structure by altering DNA-histone contacts within a nucleosome, leading eventually to a change in nucleosome position, thus facilitating or repressing binding of gene-specific transcription factors. The chain is SWI/SNF complex subunit SWI3A (SWI3A) from Arabidopsis thaliana (Mouse-ear cress).